The following is a 109-amino-acid chain: Large ribosomal subunit protein uL22 (109 aa).

The protein belongs to the universal ribosomal protein uL22 family. As to quaternary structure, part of the 50S ribosomal subunit.

In terms of biological role, this protein binds specifically to 23S rRNA; its binding is stimulated by other ribosomal proteins, e.g. L4, L17, and L20. It is important during the early stages of 50S assembly. It makes multiple contacts with different domains of the 23S rRNA in the assembled 50S subunit and ribosome. Functionally, the globular domain of the protein is located near the polypeptide exit tunnel on the outside of the subunit, while an extended beta-hairpin is found that lines the wall of the exit tunnel in the center of the 70S ribosome. The protein is Large ribosomal subunit protein uL22 of Polaromonas naphthalenivorans (strain CJ2).